Consider the following 316-residue polypeptide: Sideroflexin-4 (316 aa).

Transmembrane regions (helical) follow at residues 83-103 (QVFL…HKGI), 141-161 (LLIL…QIIL), 174-194 (ICRS…NILV), 230-250 (ISRA…MALL), and 263-283 (IAPI…PVSF).

It belongs to the sideroflexin family.

The protein resides in the mitochondrion inner membrane. Mitochondrial amino-acid transporter. Does not act as a serine transporter: not able to mediate transport of serine into mitochondria. In Danio rerio (Zebrafish), this protein is Sideroflexin-4.